The sequence spans 211 residues: Ribosome maturation factor RimM (211 aa).

In terms of domain architecture, PRC barrel spans 111 to 182; it reads PDAWYDHQLV…TLVITPPLGL (72 aa). The interval 184–211 is disordered; it reads EEIPDEQPTPSATSDAEPGSAPEGDDAR.

It belongs to the RimM family. Binds ribosomal protein uS19.

It localises to the cytoplasm. In terms of biological role, an accessory protein needed during the final step in the assembly of 30S ribosomal subunit, possibly for assembly of the head region. Essential for efficient processing of 16S rRNA. May be needed both before and after RbfA during the maturation of 16S rRNA. It has affinity for free ribosomal 30S subunits but not for 70S ribosomes. This chain is Ribosome maturation factor RimM, found in Clavibacter sepedonicus (Clavibacter michiganensis subsp. sepedonicus).